The following is a 417-amino-acid chain: Glutamyl-tRNA(Gln) amidotransferase subunit D (417 aa).

One can recognise an Asparaginase/glutaminase domain in the interval 73 to 400; that stretch reads EKVWLLATGG…EEVPRVLTTP (328 aa). Residues Thr83, Thr157, Asp158, and Lys236 contribute to the active site.

It belongs to the asparaginase 1 family. GatD subfamily. In terms of assembly, heterodimer of GatD and GatE.

The enzyme catalyses L-glutamyl-tRNA(Gln) + L-glutamine + ATP + H2O = L-glutaminyl-tRNA(Gln) + L-glutamate + ADP + phosphate + H(+). Its function is as follows. Allows the formation of correctly charged Gln-tRNA(Gln) through the transamidation of misacylated Glu-tRNA(Gln) in organisms which lack glutaminyl-tRNA synthetase. The reaction takes place in the presence of glutamine and ATP through an activated gamma-phospho-Glu-tRNA(Gln). The GatDE system is specific for glutamate and does not act on aspartate. The protein is Glutamyl-tRNA(Gln) amidotransferase subunit D of Pyrobaculum aerophilum (strain ATCC 51768 / DSM 7523 / JCM 9630 / CIP 104966 / NBRC 100827 / IM2).